Reading from the N-terminus, the 247-residue chain is EGF-like domain-containing protein C02B10.3 (247 aa).

The N-terminal stretch at 1–17 (MTGALCIVLFGVTMVTA) is a signal peptide. At 18–220 (ERPKIKDTHG…LCDKRCQKGH (203 aa)) the chain is on the extracellular side. EGF-like domains follow at residues 114–150 (FGTS…RFCE) and 180–213 (SGAS…DLCD). 4 disulfide bridges follow: C123–C138, C140–C149, C190–C201, and C203–C212. N126 carries an N-linked (GlcNAc...) asparagine glycan. Residues 221-240 (VTCSTCSSFIPAALFAIILL) traverse the membrane as a helical segment. Over 241-247 (CVNKFNY) the chain is Cytoplasmic.

It is found in the membrane. This Caenorhabditis elegans protein is EGF-like domain-containing protein C02B10.3.